A 602-amino-acid chain; its full sequence is Laccase 1 (602 aa).

An N-terminal signal peptide occupies residues Met-1–Ala-20. Plastocyanin-like domains lie at Thr-30–Lys-128 and Tyr-157–Asn-345. Cu cation is bound by residues His-78, His-80, His-108, and His-110. N-linked (GlcNAc...) asparagine glycans are attached at residues Asn-176, Asn-241, Asn-264, Asn-388, Asn-430, Asn-454, and Asn-470. Positions Asn-461 to Gly-584 constitute a Plastocyanin-like 3 domain. Residues His-492, His-495, and His-497 each coordinate Cu cation. N-linked (GlcNAc...) asparagine glycosylation occurs at Asn-512. Positions 566, 567, 568, and 572 each coordinate Cu cation.

This sequence belongs to the multicopper oxidase family. It depends on Cu cation as a cofactor.

The protein localises to the cell surface. It functions in the pathway pigment biosynthesis. Its function is as follows. Laccase; part of the Pks1 gene cluster that mediates the biosynthesis of an anthraquinone derivative pigment that contributes to conidial pigmentation that provides protection from UV radiation, heat and cold stress. The polyketide synthase Pks1 produces 1-acetyl-2,4,6,8-tetrahydroxy-9,10-anthraquinone though condensation of acetyl-CoA with malonyl-CoA. The dehydratase EthD and the laccase Mlac1 further convert the anthraquinone derivative into the final conidial pigment. In Metarhizium album (strain ARSEF 1941), this protein is Laccase 1.